A 397-amino-acid chain; its full sequence is MAKAKFERTKPHCNIGTIGHVDHGKTSLTAAITKVLAENVAGNAAVDFANIDKAPEERERGITISTAHVEYETESRHYAHVDCPGHADYVKNMITGAAQMDGAILVVSAADGPMPQTKEHILLAKQVGVPTMVVFLNKVDQLDDPELLELVELEIREELSKRDFDGDNIPIIAGSALAALEGRDDNIGKDAILKLMAAVDEWIPQPERPLDKPFLMPIEDVFSISGRGTVVTGRVETGVVKVGEEVEIVGIKDTKKTVVTGVEMFRKLLDQGQAGDNIGALIRGVGREEVERGQVLAKPGSITPHTEFTSEVYVLSKDEGGRHTPFFANYRPQFYFRTTDVTGEVILPEGTEMVMPGDNVQLSVKLIAPIAMDPGLRFAIREGGRTVGAGVVATVTK.

In terms of domain architecture, tr-type G spans 10 to 207 (KPHCNIGTIG…AVDEWIPQPE (198 aa)). The G1 stretch occupies residues 19 to 26 (GHVDHGKT). 19-26 (GHVDHGKT) provides a ligand contact to GTP. Thr-26 lines the Mg(2+) pocket. A G2 region spans residues 61 to 65 (GITIS). Positions 82–85 (DCPG) are G3. GTP is bound by residues 82–86 (DCPGH) and 137–140 (NKVD). Residues 137-140 (NKVD) form a G4 region. Residues 175 to 177 (SAL) are G5.

The protein belongs to the TRAFAC class translation factor GTPase superfamily. Classic translation factor GTPase family. EF-Tu/EF-1A subfamily. In terms of assembly, monomer.

The protein resides in the cytoplasm. The enzyme catalyses GTP + H2O = GDP + phosphate + H(+). In terms of biological role, GTP hydrolase that promotes the GTP-dependent binding of aminoacyl-tRNA to the A-site of ribosomes during protein biosynthesis. This chain is Elongation factor Tu, found in Sphingopyxis alaskensis (strain DSM 13593 / LMG 18877 / RB2256) (Sphingomonas alaskensis).